A 145-amino-acid chain; its full sequence is MASLRRLTELLCLPVTATAADIKTAYRRTALKYHPDKGGDEEKMKELNTLMEEFRETEGLRADETLEDSDPEPEESGYATFENVSVPDIDGAFFKLMKLKKCMQTYFSVNERRKQDIRPEYFELFKAFQDVPWKVLEDFFTSEMF.

Positions arginine 6 to glutamate 82 constitute a J domain. A disordered region spans residues glutamate 58–threonine 80. Positions threonine 65 to glutamate 75 are enriched in acidic residues.

In terms of assembly, interacts with host PPP2R1A; the interaction inhibits PP2A activity.

It is found in the host cytoplasm. The protein localises to the host nucleus. Promotes efficient viral genome replication by accelerating both G1 and S phase progression of the cell cycle. The polypeptide is Small t antigen (Budgerigar fledgling disease virus (BFPyV)).